The primary structure comprises 293 residues: Pantothenate synthetase (293 aa).

30–37 contacts ATP; that stretch reads MGYLHKGH. Residue His-37 is the Proton donor of the active site. Gln-61 is a (R)-pantoate binding site. Gln-61 contacts beta-alanine. ATP is bound at residue 147-150; it reads GEKD. Gln-153 lines the (R)-pantoate pocket. Residues Val-176 and 184–187 contribute to the ATP site; that span reads CSSR.

Belongs to the pantothenate synthetase family. Homodimer.

Its subcellular location is the cytoplasm. The enzyme catalyses (R)-pantoate + beta-alanine + ATP = (R)-pantothenate + AMP + diphosphate + H(+). Its pathway is cofactor biosynthesis; (R)-pantothenate biosynthesis; (R)-pantothenate from (R)-pantoate and beta-alanine: step 1/1. Functionally, catalyzes the condensation of pantoate with beta-alanine in an ATP-dependent reaction via a pantoyl-adenylate intermediate. The chain is Pantothenate synthetase from Brucella canis (strain ATCC 23365 / NCTC 10854 / RM-666).